Consider the following 157-residue polypeptide: 3-dehydroquinate dehydratase (157 aa).

Catalysis depends on Tyr22, which acts as the Proton acceptor. Residues Asn73, His79, and Asp86 each contribute to the substrate site. His99 functions as the Proton donor in the catalytic mechanism. Substrate is bound by residues 100 to 101 and Arg110; that span reads LS.

It belongs to the type-II 3-dehydroquinase family. In terms of assembly, homododecamer.

The enzyme catalyses 3-dehydroquinate = 3-dehydroshikimate + H2O. It participates in metabolic intermediate biosynthesis; chorismate biosynthesis; chorismate from D-erythrose 4-phosphate and phosphoenolpyruvate: step 3/7. Functionally, catalyzes a trans-dehydration via an enolate intermediate. In Roseiflexus castenholzii (strain DSM 13941 / HLO8), this protein is 3-dehydroquinate dehydratase.